Here is a 372-residue protein sequence, read N- to C-terminus: Alanine racemase (372 aa).

Catalysis depends on Lys35, which acts as the Proton acceptor; specific for D-alanine. The residue at position 35 (Lys35) is an N6-(pyridoxal phosphate)lysine. Arg143 contacts substrate. Residue Tyr268 is the Proton acceptor; specific for L-alanine of the active site. Met316 provides a ligand contact to substrate.

It belongs to the alanine racemase family. Pyridoxal 5'-phosphate is required as a cofactor.

The catalysed reaction is L-alanine = D-alanine. It functions in the pathway amino-acid biosynthesis; D-alanine biosynthesis; D-alanine from L-alanine: step 1/1. Functionally, catalyzes the interconversion of L-alanine and D-alanine. May also act on other amino acids. This Shewanella frigidimarina (strain NCIMB 400) protein is Alanine racemase (alr).